Consider the following 438-residue polypeptide: MTDYRGEQVVIIGLGLTGLSCVDFLRRRGVTPRVMDTRFTPPGLEKLPADVPRHLGSLHEQWLLDATLIVTSPGVPLSHPALAEAAAAGVAIIGDIELFAREASAPVVAITGSNGKSTVTCMVGEMAAAAGWQVGVGGNIGLPALTLLDSPCQLYVLELSSFQLETTHSLKAAAATVLNISEDHMNRYPLGLQQYRAAKLKIYHDAAVCVVNAEDALTLPVRGHDARCISFGAERGDYCLRRHAGQTWLMARGEPLLEGAELRVGGRHNYTNALAALALSDALGIPSAASLAALRQFRGLTHRFELVHERRGVRWINDSKATNVGSTEAALNGLEVVGTLHLLLGGDGKSADFTPLTPWLQGDRVQLYCFGQDGAQLASLCPEAATLTETLEQAMRIIGSRVRAGDLVLLSPASASLDQFSNFEVRGDVFTRLAREVG.

112-118 (GSNGKST) is a binding site for ATP.

It belongs to the MurCDEF family.

The protein localises to the cytoplasm. The catalysed reaction is UDP-N-acetyl-alpha-D-muramoyl-L-alanine + D-glutamate + ATP = UDP-N-acetyl-alpha-D-muramoyl-L-alanyl-D-glutamate + ADP + phosphate + H(+). Its pathway is cell wall biogenesis; peptidoglycan biosynthesis. Its function is as follows. Cell wall formation. Catalyzes the addition of glutamate to the nucleotide precursor UDP-N-acetylmuramoyl-L-alanine (UMA). This chain is UDP-N-acetylmuramoylalanine--D-glutamate ligase, found in Sodalis glossinidius (strain morsitans).